The chain runs to 282 residues: NADPH-dependent 7-cyano-7-deazaguanine reductase (282 aa).

88–90 (IES) is a binding site for substrate. 90-91 (SK) lines the NADPH pocket. C190 serves as the catalytic Thioimide intermediate. D197 functions as the Proton donor in the catalytic mechanism. 229 to 230 (HE) provides a ligand contact to substrate. 258–259 (RG) serves as a coordination point for NADPH.

Belongs to the GTP cyclohydrolase I family. QueF type 2 subfamily. In terms of assembly, homodimer.

Its subcellular location is the cytoplasm. It catalyses the reaction 7-aminomethyl-7-carbaguanine + 2 NADP(+) = 7-cyano-7-deazaguanine + 2 NADPH + 3 H(+). Its pathway is tRNA modification; tRNA-queuosine biosynthesis. Functionally, catalyzes the NADPH-dependent reduction of 7-cyano-7-deazaguanine (preQ0) to 7-aminomethyl-7-deazaguanine (preQ1). This chain is NADPH-dependent 7-cyano-7-deazaguanine reductase, found in Salmonella paratyphi A (strain ATCC 9150 / SARB42).